We begin with the raw amino-acid sequence, 321 residues long: Thylakoid-associated protein sll1697 (321 aa).

It localises to the cellular thylakoid membrane. This Synechocystis sp. (strain ATCC 27184 / PCC 6803 / Kazusa) protein is Thylakoid-associated protein sll1697.